Here is a 288-residue protein sequence, read N- to C-terminus: Syntaxin-1B (288 aa).

The span at 1-13 shows a compositional bias: basic and acidic residues; that stretch reads MKDRTQELRSAKD. The tract at residues 1 to 20 is disordered; the sequence is MKDRTQELRSAKDSDDEEEV. Residues 1 to 264 are Cytoplasmic-facing; it reads MKDRTQELRS…KYQSKARRKK (264 aa). Phosphoserine is present on residues S10 and S14. Positions 29–104 form a coiled coil; sequence MDEFFEQVEE…IEQSIEQEEG (76 aa). The 63-residue stretch at 191–253 folds into the t-SNARE coiled-coil homology domain; the sequence is LNEIETRHNE…ERAVSDTKKA (63 aa). A helical; Anchor for type IV membrane protein transmembrane segment spans residues 265–288; that stretch reads IMIIICCVVLGVVLASSIGGTLGL.

This sequence belongs to the syntaxin family. As to quaternary structure, interacts with OTOF. Interacts with SYT6 and SYT8; the interaction is Ca(2+)-dependent. In terms of processing, phosphorylated by CK2. Post-translationally, (Microbial infection) Targeted and hydrolyzed by C.botulinum neurotoxin type C (BoNT/C); cleavage by BoNT/C inhibits neurotransmitter release. Probably hydrolyzes the 252-Lys-|-Ala-253 bond.

The protein localises to the membrane. Functionally, potentially involved in docking of synaptic vesicles at presynaptic active zones. May mediate Ca(2+)-regulation of exocytosis acrosomal reaction in sperm. This Bos taurus (Bovine) protein is Syntaxin-1B (STX1B).